A 229-amino-acid chain; its full sequence is DNA mismatch repair protein MutH (229 aa).

This sequence belongs to the MutH family.

It is found in the cytoplasm. Its function is as follows. Sequence-specific endonuclease that cleaves unmethylated GATC sequences. It is involved in DNA mismatch repair. The sequence is that of DNA mismatch repair protein MutH from Escherichia coli (strain K12 / MC4100 / BW2952).